The following is a 447-amino-acid chain: Neuronal acetylcholine receptor subunit alpha-10 (447 aa).

The first 24 residues, 1 to 24 (MGTRSHYLDLGFLLLLFLPAECLG), serve as a signal peptide directing secretion. At 25 to 237 (AEGRLAHKLF…FTLLLRRRAA (213 aa)) the chain is on the extracellular side. N-linked (GlcNAc...) asparagine glycosylation is found at N40 and N56. 2 disulfides stabilise this stretch: C154–C168 and C218–C219. 3 helical membrane-spanning segments follow: residues 238 to 258 (AYVCNLLLPCVFISLLAPLAF), 268 to 288 (VSLGVTVLLALTVFQLILAES), and 302 to 322 (YMATMTMVTFSTALTILIMNL). At 323-425 (HYCGPNAHPV…WKRLARVMDR (103 aa)) the chain is on the cytoplasmic side. The helical transmembrane segment at 426-446 (FFLGIFFCMALVMSLIVLVQA) threads the bilayer.

It belongs to the ligand-gated ion channel (TC 1.A.9) family. Acetylcholine receptor (TC 1.A.9.1) subfamily. Alpha-10/CHRNA10 sub-subfamily. As to quaternary structure, forms homo- or heterooligomeric channels in conjunction with CHRNA10. The native outer hair cell receptor may be composed of CHRNA9:CHRNA10 heterooligomers. Found in the stoichiometric form (CHRNA9)2:(CHRNA10)3. As to expression, expressed in the outer hair cells of the cochlea and the neurons of dorsal root ganglia.

The protein resides in the synaptic cell membrane. It localises to the cell membrane. The enzyme catalyses Ca(2+)(in) = Ca(2+)(out). It carries out the reaction Mg(2+)(in) = Mg(2+)(out). It catalyses the reaction K(+)(in) = K(+)(out). The catalysed reaction is Na(+)(in) = Na(+)(out). With respect to regulation, activated by a myriad of ligands such as acetylcholine. AChR activity is inhibited by the antagonist alpha-conotoxins RgIA and GeXXA, small disulfide-constrained peptides from cone snails. In terms of biological role, component of neuronal acetylcholine receptors (nAChRs) that function as pentameric, ligand-gated cation channels with high calcium permeability among other activities. nAChRs are excitatory neurotrasnmitter receptors formed by a collection of nAChR subunits known to mediate synaptic transmission in the nervous system and the neuromuscular junction. Each nAchR subunit confers differential attributes to channel properties, including activation, deactivation and desensitization kinetics, pH sensitivity, cation permeability, and binding to allosteric modulators. Forms heteropentamers with CHRNA9. Expressed in the inner ear, in sympathetic neurons and in other non-neuronal cells, such as skin keratinocytes and lymphocytes. nAChR formed by CHRNA9:CHRNA10 mediate central nervous system control of auditory and vestibular sensory processing. The channel is permeable to a range of divalent cations including calcium, the influx of which may activate a potassium current which hyperpolarizes the cell membrane. In the ear, mediates synaptic transmission between efferent olivocochlear fibers and hair cells of the cochlea, this may lead to a reduction in basilar membrane motion, altering the activity of auditory nerve fibers and reducing the range of dynamic hearing. This may protect against acoustic trauma. May also regulate keratinocyte adhesion. In Rattus norvegicus (Rat), this protein is Neuronal acetylcholine receptor subunit alpha-10 (Chrna10).